A 1154-amino-acid chain; its full sequence is MEADWNELLRIPLPPPNPHGLPTVATTIAFDDVSELLWAGNEYGRITSFYGPELQRYTSVRAHPVAEGPVRQILFHERGVISISSRSVHMITRRGLTQWHITHDEITDLRCMSFTAQTNKIIVAGCQKAMFTIDIDKGTIVDKLRTEHNYVLMKRSRYLCAATDTGSVNALSLTDFSVVKSWKAHGAAVNDMDARGDLLVTCGFSIRQTGSPIVDPLANVYDLKTLSPLPPIPFHAGAAYVRMHPKLQTTSFVASQSGQLQVVDLMNPNAFKLRQATVSFMLGIEISPSGEALAINDAECFIQLWGSPAKIHFNEMSKEVEFADVTPRPPQVDWSPEIPLNVIGMPYYHERLLSAWPSHLLFEVGSPPAPIDPSIVPYLRSGEMGQYAANPKKTRRYQVENTRALASTEPTLIAPKFLSEKAREQSKKADDPVGDTAASLAGARISGESEDDPLLKYSNVEIKYSRFGVDDFDFRFYNQTCFSGLETHIANSFTNSLLQLLKFIPLIRNIALHHAATSCIAESCLLCEMGYLFDMLEKANGQNCQATNLLKTFSSFREASNLGLLEENLTNKSLSSAIQAVNRFFLGQIAQDYRRIAPNSEELDMRLATIASESIRCMFCQNEIVRPGNTLVNELMYPAIDMKQARRNHTLRFSNILRASIEREAQNRGWCHICRRYQQSVMRKTAHRMPHVLMLNAAINSPACRRLWTIPGWLPEEIGIVLEGGQVLCFEGEDLRMRIQGQMPGLIIYDLVGLVAEINIPEHQKAHLVSFINVSVSSRERETRSKWHLFNDFLVTEVDKEEALRFNQSWKSPCVLAFQVRDARHMVDDTWKNFLDTTLLFRDWSLNNGRPVESRVMLSDEEKPTPGTPVALDTEFVDLEKAEINVKADGSQEIVRPSKSGLARVSVLRGSGEREGVPFIDDYISVKEPIVDYVTQYSGIKPGDLDPRTSPHNIVPLKVAYKKLWLLLNLGCVFVGHGLASDFRKVNIQVPKKQTVDTQYLFFHPSKNRRLSLRYLAWAVFKEYIQEEPADSNQGHDSIEDARMALRLWKKFQEYEDAGIVGQILEEIFREGSKLGFRPPPRNGVTTVLSRPGTAVTMQNNSGRNTPSTPDVGAAASAPTTPRQAFRRSIALTPSNGTFSGPGSGEFFTGSPLK.

3 WD repeats span residues 20–59 (GLPTVATTIAFDDVSELLWAGNEYGRITSFYGPELQRYTS), 102–145 (THDE…DKLR), and 276–315 (ATVSFMLGIEISPSGEALAINDAECFIQLWGSPAKIHFNE). Positions 316–451 (MSKEVEFADV…GARISGESED (136 aa)) are linker. Residues 452-821 (DPLLKYSNVE…SPCVLAFQVR (370 aa)) enclose the USP domain. Positions 870-1048 (VALDTEFVDL…IEDARMALRL (179 aa)) constitute an Exonuclease domain. The a divalent metal cation site is built by aspartate 873, glutamate 875, aspartate 982, and aspartate 1041. Residues 1092 to 1154 (PGTAVTMQNN…GEFFTGSPLK (63 aa)) are disordered. 2 stretches are compositionally biased toward polar residues: residues 1096 to 1109 (VTMQNNSGRNTPST) and 1132 to 1141 (LTPSNGTFSG).

This sequence belongs to the peptidase C19 family. PAN2 subfamily. As to quaternary structure, forms a heterotrimer with an asymmetric homodimer of the regulatory subunit pan3 to form the poly(A)-nuclease (PAN) deadenylation complex. Requires a divalent metal cation as cofactor.

The protein localises to the cytoplasm. It carries out the reaction Exonucleolytic cleavage of poly(A) to 5'-AMP.. With respect to regulation, positively regulated by the regulatory subunit pan3. Functionally, catalytic subunit of the poly(A)-nuclease (PAN) deadenylation complex, one of two cytoplasmic mRNA deadenylases involved in mRNA turnover. PAN specifically shortens poly(A) tails of RNA and the activity is stimulated by poly(A)-binding protein pab1. PAN deadenylation is followed by rapid degradation of the shortened mRNA tails by the CCR4-NOT complex. Deadenylated mRNAs are then degraded by two alternative mechanisms, namely exosome-mediated 3'-5' exonucleolytic degradation, or deadenylation-dependent mRNA decaping and subsequent 5'-3' exonucleolytic degradation by xrn1. May also be involved in post-transcriptional maturation of mRNA poly(A) tails. The sequence is that of PAN2-PAN3 deadenylation complex catalytic subunit pan2 from Emericella nidulans (strain FGSC A4 / ATCC 38163 / CBS 112.46 / NRRL 194 / M139) (Aspergillus nidulans).